The chain runs to 546 residues: MDIKYGHVLAYRNVQFYVSECGYKAYFFCGGCLFAVGRPRIDDEYLPELAKIGLVLRGGQSKPLAAHVRRELLRRGMKWAFSSDEDELFIDSIAVLSRDGICSERELCGLLCLETYDPDIAKYMVPTNAISGLTIQAAYDFPHDRTIHIPEFPIITDIYSDLVYECSRDAFVLTCARLTELPKSLSDLVEGLFDGIPTPREALSSEIFGRRVDVIVTAKKAANTTTVQRAWDILQHGCRGKLNVNSNRTNPVQRKKHARFSSFVQIKYIPPVFKIWSCDTSSCMPSTSLNKLWEIFWKVDSVFNMNMLNLNSNLYTENGSQSDLEIIQSELGMISNALFGRHASMFVGVGPENKNISPSQKFLLLQYIHILNRLPNCYDLIRELCDHHTSTIEGECPTAMPDCALADMTNSLFRAILFLGMATEIVVNWMPSSLEEPTSRVPSPSAFADATTLLDVAETSAPKSIQDLKIRKLALILDGLYKDIDPIDVALRESVGEDTAELLCAAIDISVLSAFEHWGYYSRYMQCIISLIDTRLRNSGCITICS.

Belongs to the alphaherpesvirinae HHV-1 UL21 protein family.

The protein localises to the virion tegument. The protein resides in the host cytoplasm. Its subcellular location is the host nucleus. Its function is as follows. May facilitate the viral transport through neural circuits. The sequence is that of Tegument protein UL21 homolog (MDV033) from Gallus gallus (Chicken).